Consider the following 518-residue polypeptide: Chromosomal replication initiator protein DnaA (518 aa).

Residues methionine 1–serine 72 form a domain I, interacts with DnaA modulators region. A domain II region spans residues serine 72 to threonine 180. The segment at glutamate 145 to alanine 172 is disordered. The segment at asparagine 181–serine 397 is domain III, AAA+ region. Residues glycine 225, glycine 227, lysine 228, and threonine 229 each contribute to the ATP site. Positions arginine 398–asparagine 518 are domain IV, binds dsDNA.

The protein belongs to the DnaA family. Oligomerizes as a right-handed, spiral filament on DNA at oriC.

The protein resides in the cytoplasm. Functionally, plays an essential role in the initiation and regulation of chromosomal replication. ATP-DnaA binds to the origin of replication (oriC) to initiate formation of the DNA replication initiation complex once per cell cycle. Binds the DnaA box (a 9 base pair repeat at the origin) and separates the double-stranded (ds)DNA. Forms a right-handed helical filament on oriC DNA; dsDNA binds to the exterior of the filament while single-stranded (ss)DNA is stabiized in the filament's interior. The ATP-DnaA-oriC complex binds and stabilizes one strand of the AT-rich DNA unwinding element (DUE), permitting loading of DNA polymerase. After initiation quickly degrades to an ADP-DnaA complex that is not apt for DNA replication. Binds acidic phospholipids. This Neisseria meningitidis serogroup B (strain ATCC BAA-335 / MC58) protein is Chromosomal replication initiator protein DnaA.